A 350-amino-acid chain; its full sequence is Dihydroorotase (350 aa).

Zn(2+) contacts are provided by H13 and H15. Residues 15–17 (HLR) and N41 each bind substrate. K99, H136, and H174 together coordinate Zn(2+). The residue at position 99 (K99) is an N6-carboxylysine. H136 serves as a coordination point for substrate. Residue L219 participates in substrate binding. D247 is a binding site for Zn(2+). D247 is an active-site residue. Substrate-binding residues include H251 and A263.

It belongs to the metallo-dependent hydrolases superfamily. DHOase family. Class II DHOase subfamily. Homodimer. Zn(2+) serves as cofactor.

It catalyses the reaction (S)-dihydroorotate + H2O = N-carbamoyl-L-aspartate + H(+). Its pathway is pyrimidine metabolism; UMP biosynthesis via de novo pathway; (S)-dihydroorotate from bicarbonate: step 3/3. Its function is as follows. Catalyzes the reversible cyclization of carbamoyl aspartate to dihydroorotate. In Allorhizobium ampelinum (strain ATCC BAA-846 / DSM 112012 / S4) (Agrobacterium vitis (strain S4)), this protein is Dihydroorotase.